We begin with the raw amino-acid sequence, 99 residues long: Co-chaperonin GroES (99 aa).

It belongs to the GroES chaperonin family. Heptamer of 7 subunits arranged in a ring. Interacts with the chaperonin GroEL.

It is found in the cytoplasm. Together with the chaperonin GroEL, plays an essential role in assisting protein folding. The GroEL-GroES system forms a nano-cage that allows encapsulation of the non-native substrate proteins and provides a physical environment optimized to promote and accelerate protein folding. GroES binds to the apical surface of the GroEL ring, thereby capping the opening of the GroEL channel. This chain is Co-chaperonin GroES, found in Corynebacterium efficiens (strain DSM 44549 / YS-314 / AJ 12310 / JCM 11189 / NBRC 100395).